Consider the following 139-residue polypeptide: Classical arabinogalactan protein 3 (139 aa).

The signal sequence occupies residues 1–21; sequence MALKTLQALIFLGLFAASCLA. Glutamine 22 carries the pyrrolidone carboxylic acid modification. The segment at 30-115 is disordered; that stretch reads TFLPPVESPS…PAPRADGPVA (86 aa). 2 stretches are compositionally biased toward pro residues: residues 46–77 and 97–107; these read AEPP…PPTT and PSGPTPAPAPA. Aspartate 116 carries the GPI-anchor amidated aspartate lipid modification. Positions 117-139 are cleaved as a propeptide — removed in mature form; it reads SALTNKAFLVSTVIAGALYAVLA.

Belongs to the classical AGP family. In terms of processing, O-glycosylated on the hydroxyproline residues. Expressed at a low level in roots.

Its subcellular location is the cell membrane. Proteoglycan that seems to be implicated in diverse developmental roles such as differentiation, cell-cell recognition, embryogenesis and programmed cell death. This Arabidopsis thaliana (Mouse-ear cress) protein is Classical arabinogalactan protein 3 (AGP3).